A 348-amino-acid polypeptide reads, in one-letter code: Large ribosomal subunit protein uL10 (348 aa).

Residues 291–348 (LPEELRGVSAADTGAAEEEESTDEEAADADQADAAEDDDAADDDGDDEDAGDALGSLF) form a disordered region. Acidic residues predominate over residues 305–341 (AAEEEESTDEEAADADQADAAEDDDAADDDGDDEDAG).

This sequence belongs to the universal ribosomal protein uL10 family. In terms of assembly, part of the 50S ribosomal subunit. Forms part of the ribosomal stalk which helps the ribosome interact with GTP-bound translation factors. Forms a heptameric L10(L12)2(L12)2(L12)2 complex, where L10 forms an elongated spine to which the L12 dimers bind in a sequential fashion.

Its function is as follows. Forms part of the ribosomal stalk, playing a central role in the interaction of the ribosome with GTP-bound translation factors. The protein is Large ribosomal subunit protein uL10 of Haloferax volcanii (strain ATCC 29605 / DSM 3757 / JCM 8879 / NBRC 14742 / NCIMB 2012 / VKM B-1768 / DS2) (Halobacterium volcanii).